Consider the following 213-residue polypeptide: E3 ubiquitin-protein ligase NleG8 (213 aa).

Residues 136–189 (CPITLCVPETGVFVKNARCSKVCSLYDISALTEMLRRNASHPLSREAFTPGMIV) are RING/U-box domain. The short motif at 211 to 213 (TRL) is the PDZ-binding motif element.

This sequence belongs to the NleG E3 ligase family. As to quaternary structure, interacts with host GOPC (human protein).

The protein resides in the secreted. It localises to the host cytoplasm. The enzyme catalyses S-ubiquitinyl-[E2 ubiquitin-conjugating enzyme]-L-cysteine + [acceptor protein]-L-lysine = [E2 ubiquitin-conjugating enzyme]-L-cysteine + N(6)-ubiquitinyl-[acceptor protein]-L-lysine.. Functionally, effector proteins function to alter host cell physiology and promote bacterial survival in host tissues. This protein is an E3 ubiquitin-protein ligase that probably interferes with the host's ubiquitination pathway and targets host proteins for proteasomal degradation. Mice infected with a strain of bacteria deleted for this gene had an increased survival rate. Can be ubiquitinylated, and ubiquitinate ubiquitin, giving rise to polyubiquitin chains (in vitro). The chain is E3 ubiquitin-protein ligase NleG8 from Citrobacter rodentium.